The chain runs to 470 residues: MGELNKSARQIVEAVGGAENIAAATHCVTRLRFALIDESKVDQEMLDQIDVVKGSFSTNGQFQVVIGQGTVNKVYAELVKETGIGESTKDEVKKASEKNMNPLQRAVKTLADIFIPILPAIVTAGLLMGINNILTAEGIFFSTKSIVQVYPQWADLANMINLIAGTAFTFLPALIGWSAVKRFGGNPLLGIVLGVMLVHPDLLNAWGYGAAEQSGEIPVWNLFGLEVQKVGYQGQVLPILLASYMLAKIEVFLTKRTPEGIQLLVVAPITLLLTGFASFIIIGPITFAIGNVLTSGLISVFGSFAALGGLLYGGFYSALVITGMHHTFLAVDLQLIGSKLGGTFLWPMLALSNIAQGSAALAMMFIVKDEKQKGLSLTSGISAYLGITEPAIFGVNLRYRFPFIIAMVSSGLAGMYISSQGVLASSVGVGGVPGIFSIMSQYWGAFAIGMAIVLIVPFAGTYAYARFKHK.

One can recognise a PTS EIIB type-1 domain in the interval 1–88 (MGELNKSARQ…VKETGIGEST (88 aa)). Cysteine 27 (phosphocysteine intermediate; for EIIB activity) is an active-site residue. A Phosphocysteine; by EIIA modification is found at cysteine 27. The 363-residue stretch at 108–470 (KTLADIFIPI…TYAYARFKHK (363 aa)) folds into the PTS EIIC type-1 domain. Helical transmembrane passes span 110–130 (LADIFIPILPAIVTAGLLMGI), 160–180 (INLIAGTAFTFLPALIGWSAV), 183–203 (FGGNPLLGIVLGVMLVHPDLL), 234–254 (GQVLPILLASYMLAKIEVFLT), 263–283 (LLVVAPITLLLTGFASFIIIG), 301–321 (FGSFAALGGLLYGGFYSALVI), 326–346 (HTFLAVDLQLIGSKLGGTFLW), 347–367 (PMLALSNIAQGSAALAMMFIV), 403–423 (FIIAMVSSGLAGMYISSQGVL), and 443–463 (WGAFAIGMAIVLIVPFAGTYA).

The protein localises to the cell membrane. The catalysed reaction is alpha,alpha-trehalose(out) + N(pros)-phospho-L-histidyl-[protein] = alpha,alpha-trehalose 6-phosphate(in) + L-histidyl-[protein]. Its function is as follows. The phosphoenolpyruvate-dependent sugar phosphotransferase system (sugar PTS), a major carbohydrate active transport system, catalyzes the phosphorylation of incoming sugar substrates concomitantly with their translocation across the cell membrane. This system is involved in trehalose transport. The sequence is that of PTS system trehalose-specific EIIBC component (treP) from Bacillus subtilis (strain 168).